A 447-amino-acid chain; its full sequence is Methylenetetrahydrofolate--tRNA-(uracil-5-)-methyltransferase TrmFO (447 aa).

Residue G8–G13 coordinates FAD. Residues N398–R421 form a disordered region. Over residues P406–Q417 the composition is skewed to basic and acidic residues.

It belongs to the MnmG family. TrmFO subfamily. FAD serves as cofactor.

The protein localises to the cytoplasm. The enzyme catalyses uridine(54) in tRNA + (6R)-5,10-methylene-5,6,7,8-tetrahydrofolate + NADH + H(+) = 5-methyluridine(54) in tRNA + (6S)-5,6,7,8-tetrahydrofolate + NAD(+). It catalyses the reaction uridine(54) in tRNA + (6R)-5,10-methylene-5,6,7,8-tetrahydrofolate + NADPH + H(+) = 5-methyluridine(54) in tRNA + (6S)-5,6,7,8-tetrahydrofolate + NADP(+). Functionally, catalyzes the folate-dependent formation of 5-methyl-uridine at position 54 (M-5-U54) in all tRNAs. In Rubrobacter xylanophilus (strain DSM 9941 / JCM 11954 / NBRC 16129 / PRD-1), this protein is Methylenetetrahydrofolate--tRNA-(uracil-5-)-methyltransferase TrmFO.